Reading from the N-terminus, the 44-residue chain is Non-structural protein 7b (44 aa).

The helical transmembrane segment at 9-29 (FYLCFLAFLLFLVLIMLIIFW) threads the bilayer.

The protein resides in the host membrane. The polypeptide is Non-structural protein 7b (Bat coronavirus Rp3/2004 (BtCoV/Rp3/2004)).